A 605-amino-acid polypeptide reads, in one-letter code: Heparan-sulfate 6-O-sulfotransferase 2 (605 aa).

Residues 1-4 lie on the Cytoplasmic side of the membrane; it reads MALP. The segment at 1-66 is disordered; it reads MALPACAVRE…GVSHGFHTRP (66 aa). A helical; Signal-anchor for type II membrane protein transmembrane segment spans residues 5–27; that stretch reads ACAVREFEPPRQPERGAPVRTTC. Residues 9–18 are compositionally biased toward basic and acidic residues; it reads REFEPPRQPE. Topologically, residues 28–605 are lumenal; that stretch reads PRRHSRVEAE…DYIGSVEKWR (578 aa). N-linked (GlcNAc...) asparagine glycosylation occurs at Asn209. 233–241 provides a ligand contact to 3'-phosphoadenylyl sulfate; it reads HIQKTGGTT. Substrate is bound by residues 263-264, Arg280, Trp285, and His290; that span reads KK. Residue His290 is the Proton acceptor of the active site. 3'-phosphoadenylyl sulfate contacts are provided by Arg325 and Ser333. Substrate-binding residues include His337 and Trp344. Residue Asn404 is glycosylated (N-linked (GlcNAc...) asparagine). 457–459 contacts 3'-phosphoadenylyl sulfate; it reads TQY. N-linked (GlcNAc...) asparagine glycosylation occurs at Asn460. 3'-phosphoadenylyl sulfate is bound at residue 463-464; sequence RA. Residues 530–605 are disordered; the sequence is FQSQGQGQSQ…DYIGSVEKWR (76 aa). The span at 531–571 shows a compositional bias: low complexity; sequence QSQGQGQSQNPNQNQSQNPNPNANQNLTQNLMQNLTQSLSQ. Residues Asn544, Asn556, Asn564, Asn589, and Asn592 are each glycosylated (N-linked (GlcNAc...) asparagine). The span at 579–597 shows a compositional bias: polar residues; the sequence is KQNSGKEQNDNTSNGTNDY.

This sequence belongs to the sulfotransferase 6 family.

Its subcellular location is the membrane. It carries out the reaction alpha-D-glucosaminyl-[heparan sulfate](n) + 3'-phosphoadenylyl sulfate = 6-sulfo-alpha-D-glucosaminyl-[heparan sulfate](n) + adenosine 3',5'-bisphosphate + H(+). 6-O-sulfation enzyme which catalyzes the transfer of sulfate from 3'-phosphoadenosine 5'-phosphosulfate (PAPS) to position 6 of the N-sulfoglucosamine residue (GlcNS) of heparan sulfate. This chain is Heparan-sulfate 6-O-sulfotransferase 2, found in Homo sapiens (Human).